Consider the following 256-residue polypeptide: Undecaprenyl-diphosphatase (256 aa).

The next 7 helical transmembrane spans lie at 1 to 21 (MDIF…FLPV), 41 to 61 (FHKT…LALF), 69 to 89 (VDIW…GFLL), 96 to 116 (LFAP…FLVL), 172 to 192 (VAAE…TGYD), 207 to 227 (ALGV…KGFL), and 233 to 253 (FNFV…LFYL).

This sequence belongs to the UppP family.

The protein resides in the cell inner membrane. It catalyses the reaction di-trans,octa-cis-undecaprenyl diphosphate + H2O = di-trans,octa-cis-undecaprenyl phosphate + phosphate + H(+). Functionally, catalyzes the dephosphorylation of undecaprenyl diphosphate (UPP). Confers resistance to bacitracin. The sequence is that of Undecaprenyl-diphosphatase from Wolinella succinogenes (strain ATCC 29543 / DSM 1740 / CCUG 13145 / JCM 31913 / LMG 7466 / NCTC 11488 / FDC 602W) (Vibrio succinogenes).